The sequence spans 166 residues: Protein E6 (166 aa).

Zinc fingers lie at residues 50-86 (CNFCGKFLSHLEACEFDDKRLSLIWKGHLVYACCRWC) and 123-159 (CQNCMRYLDSIEKLDICGRRLPFHKVRDSWKGICRLC).

This sequence belongs to the papillomaviridae E6 protein family. Forms homodimers. Interacts with ubiquitin-protein ligase UBE3A/E6-AP; this interaction stimulates UBE3A ubiquitin activity. Interacts with host BAK1.

The protein resides in the host cytoplasm. The protein localises to the host nucleus. In terms of biological role, plays a major role in the induction and maintenance of cellular transformation. E6 associates with host UBE3A/E6-AP ubiquitin-protein ligase and modulates its activity. Protects host keratinocytes from apoptosis by mediating the degradation of host BAK1. May also inhibit host immune response. The chain is Protein E6 from Homo sapiens (Human).